We begin with the raw amino-acid sequence, 146 residues long: Protein STIG1 (146 aa).

Residues 1 to 23 (MAFINLLILIILTLSSTPITTMS) form the signal peptide. Asn-31, Asn-61, and Asn-84 each carry an N-linked (GlcNAc...) asparagine glycan.

The protein belongs to the STIG1 family. Glycosylated. Expressed exclusively in the stigmatic secretory zone.

It is found in the secreted. Its function is as follows. Involved in the temporal regulation of the exudate secretion onto the stigma. This is Protein STIG1 from Nicotiana tabacum (Common tobacco).